The primary structure comprises 399 residues: 1-deoxy-D-xylulose 5-phosphate reductoisomerase (399 aa).

Threonine 13, glycine 14, serine 15, isoleucine 16, and asparagine 127 together coordinate NADPH. A 1-deoxy-D-xylulose 5-phosphate-binding site is contributed by lysine 128. Residue glutamate 129 participates in NADPH binding. Aspartate 153 provides a ligand contact to Mn(2+). The 1-deoxy-D-xylulose 5-phosphate site is built by serine 154, glutamate 155, serine 187, and histidine 210. Mn(2+) is bound at residue glutamate 155. Glycine 216 provides a ligand contact to NADPH. 1-deoxy-D-xylulose 5-phosphate is bound by residues serine 223, asparagine 228, lysine 229, and glutamate 232. Glutamate 232 serves as a coordination point for Mn(2+).

The protein belongs to the DXR family. Requires Mg(2+) as cofactor. The cofactor is Mn(2+).

The catalysed reaction is 2-C-methyl-D-erythritol 4-phosphate + NADP(+) = 1-deoxy-D-xylulose 5-phosphate + NADPH + H(+). It functions in the pathway isoprenoid biosynthesis; isopentenyl diphosphate biosynthesis via DXP pathway; isopentenyl diphosphate from 1-deoxy-D-xylulose 5-phosphate: step 1/6. Catalyzes the NADPH-dependent rearrangement and reduction of 1-deoxy-D-xylulose-5-phosphate (DXP) to 2-C-methyl-D-erythritol 4-phosphate (MEP). In Bordetella petrii (strain ATCC BAA-461 / DSM 12804 / CCUG 43448), this protein is 1-deoxy-D-xylulose 5-phosphate reductoisomerase.